The sequence spans 709 residues: Polyribonucleotide nucleotidyltransferase (709 aa).

Positions 487 and 493 each coordinate Mg(2+). In terms of domain architecture, KH spans 554–613 (PRIHTMKISSDKIKDVIGKGGAVIRALCEETGTTIEIEDDGTIKIAATEGAAAKEAIRRI). The 69-residue stretch at 623–691 (GKIYPGKVMR…RQGRIRLSIK (69 aa)) folds into the S1 motif domain.

Belongs to the polyribonucleotide nucleotidyltransferase family. In terms of assembly, component of the RNA degradosome, which is a multiprotein complex involved in RNA processing and mRNA degradation. It depends on Mg(2+) as a cofactor.

Its subcellular location is the cytoplasm. It carries out the reaction RNA(n+1) + phosphate = RNA(n) + a ribonucleoside 5'-diphosphate. Its function is as follows. Involved in mRNA degradation. Catalyzes the phosphorolysis of single-stranded polyribonucleotides processively in the 3'- to 5'-direction. The polypeptide is Polyribonucleotide nucleotidyltransferase (Aliivibrio salmonicida (strain LFI1238) (Vibrio salmonicida (strain LFI1238))).